The following is a 62-amino-acid chain: Prokaryotic ubiquitin-like protein Pup (62 aa).

A disordered region spans residues 1-29 (MSQQSLNAPGPGAEDGNDPEAVTGGQTFA). The segment at 21–56 (AVTGGQTFASAQAADDLLDEIDSVLESNAETFVRSF) is ARC ATPase binding. At Gln62 the chain carries Deamidated glutamine. Gln62 is covalently cross-linked (Isoglutamyl lysine isopeptide (Gln-Lys) (interchain with K-? in acceptor proteins)).

The protein belongs to the prokaryotic ubiquitin-like protein family. Strongly interacts with the proteasome-associated ATPase ARC through a hydrophobic interface; the interacting region of Pup lies in its C-terminal half. There is one Pup binding site per ARC hexamer ring. In terms of processing, is modified by deamidation of its C-terminal glutamine to glutamate by the deamidase Dop, a prerequisite to the subsequent pupylation process.

It participates in protein degradation; proteasomal Pup-dependent pathway. Functionally, protein modifier that is covalently attached to lysine residues of substrate proteins, thereby targeting them for proteasomal degradation. The tagging system is termed pupylation. This Brachybacterium faecium (strain ATCC 43885 / DSM 4810 / JCM 11609 / LMG 19847 / NBRC 14762 / NCIMB 9860 / 6-10) protein is Prokaryotic ubiquitin-like protein Pup.